The following is a 485-amino-acid chain: Adenosylhomocysteinase (485 aa).

Substrate is bound by residues Thr60, Asp146, and Glu208. 209-211 is an NAD(+) binding site; the sequence is TTT. The substrate site is built by Lys238 and Asp242. NAD(+)-binding positions include Asn243, 272–277, Glu295, Asn330, 351–353, and Asn399; these read GYGDVG and IGH.

The protein belongs to the adenosylhomocysteinase family. The cofactor is NAD(+).

The protein localises to the cytoplasm. The enzyme catalyses S-adenosyl-L-homocysteine + H2O = L-homocysteine + adenosine. The protein operates within amino-acid biosynthesis; L-homocysteine biosynthesis; L-homocysteine from S-adenosyl-L-homocysteine: step 1/1. In terms of biological role, may play a key role in the regulation of the intracellular concentration of adenosylhomocysteine. This is Adenosylhomocysteinase from Streptomyces avermitilis (strain ATCC 31267 / DSM 46492 / JCM 5070 / NBRC 14893 / NCIMB 12804 / NRRL 8165 / MA-4680).